A 375-amino-acid polypeptide reads, in one-letter code: Lipid-A-disaccharide synthase (375 aa).

It belongs to the LpxB family.

The enzyme catalyses a lipid X + a UDP-2-N,3-O-bis[(3R)-3-hydroxyacyl]-alpha-D-glucosamine = a lipid A disaccharide + UDP + H(+). The protein operates within bacterial outer membrane biogenesis; LPS lipid A biosynthesis. Functionally, condensation of UDP-2,3-diacylglucosamine and 2,3-diacylglucosamine-1-phosphate to form lipid A disaccharide, a precursor of lipid A, a phosphorylated glycolipid that anchors the lipopolysaccharide to the outer membrane of the cell. This chain is Lipid-A-disaccharide synthase, found in Pseudomonas putida (strain ATCC 700007 / DSM 6899 / JCM 31910 / BCRC 17059 / LMG 24140 / F1).